Here is a 103-residue protein sequence, read N- to C-terminus: Large ribosomal subunit protein bL21 (103 aa).

It belongs to the bacterial ribosomal protein bL21 family. Part of the 50S ribosomal subunit. Contacts protein L20.

In terms of biological role, this protein binds to 23S rRNA in the presence of protein L20. This is Large ribosomal subunit protein bL21 from Desulfitobacterium hafniense (strain DSM 10664 / DCB-2).